A 422-amino-acid polypeptide reads, in one-letter code: UDP-N-acetylglucosamine 1-carboxyvinyltransferase (422 aa).

Residue 22–23 (KN) coordinates phosphoenolpyruvate. Residue Arg93 coordinates UDP-N-acetyl-alpha-D-glucosamine. Residue Cys117 is the Proton donor of the active site. At Cys117 the chain carries 2-(S-cysteinyl)pyruvic acid O-phosphothioketal. Residues 122–126 (RPVDL), Asp308, and Leu330 each bind UDP-N-acetyl-alpha-D-glucosamine.

Belongs to the EPSP synthase family. MurA subfamily.

It localises to the cytoplasm. The catalysed reaction is phosphoenolpyruvate + UDP-N-acetyl-alpha-D-glucosamine = UDP-N-acetyl-3-O-(1-carboxyvinyl)-alpha-D-glucosamine + phosphate. It participates in cell wall biogenesis; peptidoglycan biosynthesis. Its function is as follows. Cell wall formation. Adds enolpyruvyl to UDP-N-acetylglucosamine. This is UDP-N-acetylglucosamine 1-carboxyvinyltransferase from Helicobacter pylori (strain ATCC 700392 / 26695) (Campylobacter pylori).